Consider the following 464-residue polypeptide: Dihydrolipoyl dehydrogenase (464 aa).

FAD contacts are provided by residues 33 to 41, Lys-50, and Gly-113; that span reads EPKYWGGVC. Cys-41 and Cys-46 are oxidised to a cystine. NAD(+) is bound by residues 178 to 182, Glu-201, and 266 to 269; these read GAGAI and AIGF. Residues Asp-309 and Ala-317 each contribute to the FAD site. The active-site Proton acceptor is His-443.

It belongs to the class-I pyridine nucleotide-disulfide oxidoreductase family. As to quaternary structure, homodimer. Part of the PDH complex, consisting of multiple copies of AceE (E1), DlaT (E2) and Lpd (E3), and of the BCKADH complex, consisting of multiple copies of BkdA/BkdB (E1), BkdC (E2) and Lpd (E3). Requires FAD as cofactor.

The protein localises to the cytoplasm. It catalyses the reaction N(6)-[(R)-dihydrolipoyl]-L-lysyl-[protein] + NAD(+) = N(6)-[(R)-lipoyl]-L-lysyl-[protein] + NADH + H(+). Functionally, lipoamide dehydrogenase is a component of the alpha-ketoacid dehydrogenase complexes. Catalyzes the reoxidation of dihydrolipoyl groups which are covalently attached to the lipoate acyltransferase components (E2) of the complexes. The protein is Dihydrolipoyl dehydrogenase (lpd) of Mycobacterium bovis (strain ATCC BAA-935 / AF2122/97).